A 469-amino-acid chain; its full sequence is DNA-binding transcriptional regulator NtrC (469 aa).

Positions 5 to 119 (IVWVVDDDSS…EAVALVERAI (115 aa)) constitute a Response regulatory domain. The residue at position 54 (Asp54) is a 4-aspartylphosphate. One can recognise a Sigma-54 factor interaction domain in the interval 140-369 (IIGEAPAMQD…LENTCRWLTV (230 aa)). ATP-binding positions include 168-175 (GESGTGKE) and 231-240 (ADGGTLFLDE). The segment at residues 445–464 (KQEAARLLGWGRNTLTRKLK) is a DNA-binding region (H-T-H motif).

Phosphorylated and dephosphorylated by NtrB.

It localises to the cytoplasm. Member of the two-component regulatory system NtrB/NtrC, which controls expression of the nitrogen-regulated (ntr) genes in response to nitrogen limitation. Phosphorylated NtrC binds directly to DNA and stimulates the formation of open promoter-sigma54-RNA polymerase complexes. This Escherichia coli O157:H7 protein is DNA-binding transcriptional regulator NtrC (glnG).